The primary structure comprises 366 residues: MSEEEQGSGTTTGCGLPSIEQMLAANPGKTPISLLQEYGTRIGKTPVYDLLKAEGQAHQPNFTFRVTVGDTSCTGQGPSKKAAKHKAAEVALKHLKGGSMLEPALEDSSSFSPLDSSLPEDVPVFTAAAAATPVPSAVPTRSSPMEVQPPVSPQQSECNPVGALQELVVQKGWRLPEYTVTQESGPAHRKEFTMTCRVERFIEIGSGTSKKLAKRNAAAKMLLRVHTVPLDARDGNEAEPEDDHFSIGVGSRLDGLRNRGPGCTWDSLRNSVGEKILSLRSCSLGSLGALGPACCSVLSELSEEQAFHVSYLDIEELSLSGLCQCLVELSTQPATVCHGSAATREAARGEAARRALQYLKIMAGSK.

Sufficient for interaction with PRKRA regions lie at residues Met-22–Leu-105, Ser-152–Asp-234, and Leu-287–Lys-366. Residues Thr-30–Gly-97 form the DRBM 1 domain. Residues Pro-135–Cys-158 form a disordered region. Residue Ser-152 is modified to Phosphoserine. 2 DRBM domains span residues Asn-159 to Thr-227 and Ala-293 to Ile-361. Residues Val-228–Lys-366 form a sufficient for interaction with DICER1 region.

This sequence belongs to the TARBP2 family. As to quaternary structure, self-associates. Component of the RISC loading complex (RLC), or micro-RNA (miRNA) loading complex (miRLC), which is composed of DICER1, AGO2 and TARBP2. Note that the trimeric RLC/miRLC is also referred to as RISC. Interacts with EIF2AK2/PKR and inhibits its protein kinase activity. Interacts with DHX9 and PRKRA. Interacts with DICER1, AGO2, MOV10, EIF6 and RPL7A (60S ribosome subunit); they form a large RNA-induced silencing complex (RISC). Interacts with IRF7; this interaction prevents IRF7 phosphorylation and activation.

It localises to the cytoplasm. The protein localises to the perinuclear region. Its subcellular location is the nucleus. Its function is as follows. Required for formation of the RNA induced silencing complex (RISC). Component of the RISC loading complex (RLC), also known as the micro-RNA (miRNA) loading complex (miRLC), which is composed of DICER1, AGO2 and TARBP2. Within the RLC/miRLC, DICER1 and TARBP2 are required to process precursor miRNAs (pre-miRNAs) to mature miRNAs and then load them onto AGO2. AGO2 bound to the mature miRNA constitutes the minimal RISC and may subsequently dissociate from DICER1 and TARBP2. May also play a role in the production of short interfering RNAs (siRNAs) from double-stranded RNA (dsRNA) by DICER1. Binds in vitro to the PRM1 3'-UTR. Seems to act as a repressor of translation. For some pre-miRNA substrates, may also alter the choice of cleavage site by DICER1. Negatively regulates IRF7-mediated IFN-beta signaling triggered by viral infection by inhibiting the phosphorylation of IRF7 and promoting its 'Lys'-48-linked ubiquitination and degradation. The polypeptide is RISC-loading complex subunit TARBP2 (Bos taurus (Bovine)).